A 256-amino-acid polypeptide reads, in one-letter code: L-rhamnose 1-dehydrogenase (NAD(P)(+)) (256 aa).

NADP(+)-binding residues include G12, S14, R15, I17, S37, D66, A67, and N93. The active-site Proton donor is the S146. Positions 146, 148, 156, and 159 each coordinate beta-L-rhamnose. Positions 159 and 163 each coordinate NADP(+). The active-site Proton acceptor is Y159. K163 (lowers pKa of active site Tyr) is an active-site residue. Residue T191 participates in beta-L-rhamnose binding. NADP(+) is bound at residue I192. N197 provides a ligand contact to beta-L-rhamnose.

Belongs to the short-chain dehydrogenases/reductases (SDR) family.

It catalyses the reaction L-rhamnofuranose + NAD(+) = L-rhamnono-1,4-lactone + NADH + H(+). The enzyme catalyses L-rhamnofuranose + NADP(+) = L-rhamnono-1,4-lactone + NADPH + H(+). Its pathway is carbohydrate degradation; L-rhamnose degradation. Its function is as follows. NAD(P)-dependent dehydrogenase that catalyzes the oxidation of L-rhamnose to L-rhamnono-1,4-lactone. Also shows high activity with L-lyxose and low activity with L-mannose and L-fucose. Can utilize either NAD(+) or NADP(+), with a strong preference for NADP(+). Catalyzes the first step in an alternative pathway for rhamnose utilization that does not involve phosphorylated intermediates. This chain is L-rhamnose 1-dehydrogenase (NAD(P)(+)), found in Azotobacter vinelandii (strain DJ / ATCC BAA-1303).